The sequence spans 87 residues: Small ribosomal subunit protein uS17 (87 aa).

The protein belongs to the universal ribosomal protein uS17 family. Part of the 30S ribosomal subunit.

One of the primary rRNA binding proteins, it binds specifically to the 5'-end of 16S ribosomal RNA. The polypeptide is Small ribosomal subunit protein uS17 (Bacillus velezensis (strain DSM 23117 / BGSC 10A6 / LMG 26770 / FZB42) (Bacillus amyloliquefaciens subsp. plantarum)).